The following is a 500-amino-acid chain: NAD(P)H-quinone oxidoreductase chain 4, chloroplastic (500 aa).

A run of 14 helical transmembrane segments spans residues 4 to 24 (FPWLTIIVVFPISAGSLMLFL), 35 to 55 (YTICICILELLITTYAFCYNF), 87 to 107 (IGTILLTGFITTLATLAAFPV), 113 to 130 (LFHFLMLAMYSGQIGSFS), 134 to 154 (LLLFFIMWELELIPVYLLLSM), 167 to 187 (FILYTAGSSIFLLIGVLGISL), 211 to 231 (ILFYIGFVIALTVKSPIIPLH), 242 to 262 (HYSTCMLLAGILLKMGAYGLV), 272 to 292 (AHSLFSPWLMAVGTIQIIYAA), 305 to 325 (IAYSSVSHMGFIIIGIGSITD), 330 to 350 (GAILQIISHGFIGAALFFLAG), 386 to 406 (LALPGMSGFVAELIVFFGIIT), 416 to 436 (ILIIFVMAIGIILTPIYLLSM), and 462 to 482 (LFLSISILLPIIGIGIYPDFV).

Belongs to the complex I subunit 4 family.

It localises to the plastid. It is found in the chloroplast thylakoid membrane. It catalyses the reaction a plastoquinone + NADH + (n+1) H(+)(in) = a plastoquinol + NAD(+) + n H(+)(out). The enzyme catalyses a plastoquinone + NADPH + (n+1) H(+)(in) = a plastoquinol + NADP(+) + n H(+)(out). This chain is NAD(P)H-quinone oxidoreductase chain 4, chloroplastic, found in Draba nemorosa (Woodland whitlowgrass).